The following is a 229-amino-acid chain: Large ribosomal subunit protein uL1 (229 aa).

Belongs to the universal ribosomal protein uL1 family. Part of the 50S ribosomal subunit.

Functionally, binds directly to 23S rRNA. The L1 stalk is quite mobile in the ribosome, and is involved in E site tRNA release. In terms of biological role, protein L1 is also a translational repressor protein, it controls the translation of the L11 operon by binding to its mRNA. The chain is Large ribosomal subunit protein uL1 from Flavobacterium psychrophilum (strain ATCC 49511 / DSM 21280 / CIP 103535 / JIP02/86).